The primary structure comprises 202 residues: Glycolipid transfer protein 1 (202 aa).

Positions 52, 56, 99, and 138 each coordinate a ganglioside GM3 (d18:1(4E)).

The protein belongs to the GLTP family.

In terms of biological role, may be involved in glycolipids transfer. The protein is Glycolipid transfer protein 1 of Arabidopsis thaliana (Mouse-ear cress).